The chain runs to 154 residues: 6,7-dimethyl-8-ribityllumazine synthase (154 aa).

Residues Phe26, 60–62 (ALE), and 84–86 (CII) contribute to the 5-amino-6-(D-ribitylamino)uracil site. 89–90 (ET) provides a ligand contact to (2S)-2-hydroxy-3-oxobutyl phosphate. The active-site Proton donor is the His92. 5-amino-6-(D-ribitylamino)uracil is bound at residue Asn117. Arg131 provides a ligand contact to (2S)-2-hydroxy-3-oxobutyl phosphate.

This sequence belongs to the DMRL synthase family.

It carries out the reaction (2S)-2-hydroxy-3-oxobutyl phosphate + 5-amino-6-(D-ribitylamino)uracil = 6,7-dimethyl-8-(1-D-ribityl)lumazine + phosphate + 2 H2O + H(+). The protein operates within cofactor biosynthesis; riboflavin biosynthesis; riboflavin from 2-hydroxy-3-oxobutyl phosphate and 5-amino-6-(D-ribitylamino)uracil: step 1/2. Its function is as follows. Catalyzes the formation of 6,7-dimethyl-8-ribityllumazine by condensation of 5-amino-6-(D-ribitylamino)uracil with 3,4-dihydroxy-2-butanone 4-phosphate. This is the penultimate step in the biosynthesis of riboflavin. In Paracidovorax citrulli (strain AAC00-1) (Acidovorax citrulli), this protein is 6,7-dimethyl-8-ribityllumazine synthase.